The following is a 285-amino-acid chain: 2-dehydro-3-deoxyphosphooctonate aldolase (285 aa).

It belongs to the KdsA family.

It localises to the cytoplasm. It catalyses the reaction D-arabinose 5-phosphate + phosphoenolpyruvate + H2O = 3-deoxy-alpha-D-manno-2-octulosonate-8-phosphate + phosphate. The protein operates within carbohydrate biosynthesis; 3-deoxy-D-manno-octulosonate biosynthesis; 3-deoxy-D-manno-octulosonate from D-ribulose 5-phosphate: step 2/3. Its pathway is bacterial outer membrane biogenesis; lipopolysaccharide biosynthesis. The polypeptide is 2-dehydro-3-deoxyphosphooctonate aldolase (Acidovorax sp. (strain JS42)).